Here is a 230-residue protein sequence, read N- to C-terminus: 5'-methylthioadenosine/S-adenosylhomocysteine nucleosidase (230 aa).

The active-site Proton acceptor is the Glu12. Residues Gly78, Ile153, and 174-175 (ME) contribute to the substrate site. Asp198 (proton donor) is an active-site residue.

It belongs to the PNP/UDP phosphorylase family. MtnN subfamily.

It catalyses the reaction S-adenosyl-L-homocysteine + H2O = S-(5-deoxy-D-ribos-5-yl)-L-homocysteine + adenine. The catalysed reaction is S-methyl-5'-thioadenosine + H2O = 5-(methylsulfanyl)-D-ribose + adenine. It carries out the reaction 5'-deoxyadenosine + H2O = 5-deoxy-D-ribose + adenine. Its pathway is amino-acid biosynthesis; L-methionine biosynthesis via salvage pathway; S-methyl-5-thio-alpha-D-ribose 1-phosphate from S-methyl-5'-thioadenosine (hydrolase route): step 1/2. Functionally, catalyzes the irreversible cleavage of the glycosidic bond in both 5'-methylthioadenosine (MTA) and S-adenosylhomocysteine (SAH/AdoHcy) to adenine and the corresponding thioribose, 5'-methylthioribose and S-ribosylhomocysteine, respectively. Also cleaves 5'-deoxyadenosine, a toxic by-product of radical S-adenosylmethionine (SAM) enzymes, into 5-deoxyribose and adenine. The chain is 5'-methylthioadenosine/S-adenosylhomocysteine nucleosidase from Shewanella frigidimarina (strain NCIMB 400).